The sequence spans 740 residues: Elongation factor 2 (740 aa).

One can recognise a tr-type G domain in the interval 23–264 (AQIRNAGTLA…MIIEHIPPPN (242 aa)). GTP contacts are provided by residues 32-39 (AHVDHGKT), 98-102 (DTPGH), and 152-155 (NKID). Position 605 is a diphthamide (His605).

Belongs to the TRAFAC class translation factor GTPase superfamily. Classic translation factor GTPase family. EF-G/EF-2 subfamily.

Its subcellular location is the cytoplasm. In terms of biological role, catalyzes the GTP-dependent ribosomal translocation step during translation elongation. During this step, the ribosome changes from the pre-translocational (PRE) to the post-translocational (POST) state as the newly formed A-site-bound peptidyl-tRNA and P-site-bound deacylated tRNA move to the P and E sites, respectively. Catalyzes the coordinated movement of the two tRNA molecules, the mRNA and conformational changes in the ribosome. This Pyrobaculum aerophilum (strain ATCC 51768 / DSM 7523 / JCM 9630 / CIP 104966 / NBRC 100827 / IM2) protein is Elongation factor 2.